The sequence spans 101 residues: Large ribosomal subunit protein bL28 (101 aa).

This sequence belongs to the bacterial ribosomal protein bL28 family.

The chain is Large ribosomal subunit protein bL28 from Rhodopseudomonas palustris (strain BisB5).